Consider the following 265-residue polypeptide: Selenoprotein Pb (265 aa).

The N-terminal stretch at 1 to 18 (MQALWPLLLSALPALLGA) is a signal peptide. Asn-28 is a glycosylation site (N-linked (GlcNAc...) asparagine). Position 64 (Sec-64) is a non-standard amino acid, selenocysteine. N-linked (GlcNAc...) asparagine glycans are attached at residues Asn-88, Asn-178, Asn-184, and Asn-207. The disordered stretch occupies residues 188 to 265 (SESSDSTKND…SHQEHVHNHR (78 aa)). A compositionally biased stretch (polar residues) spans 201 to 211 (ENNQRPNSTEP). Residues 215-231 (AHHHHHQQHEPHHHHHN) are compositionally biased toward basic residues. Positions 239-265 (KSGDSDVTGKPKEPPHHSHQEHVHNHR) are enriched in basic and acidic residues.

Its subcellular location is the secreted. Might be responsible for some of the extracellular antioxidant defense properties of selenium. This Danio rerio (Zebrafish) protein is Selenoprotein Pb (sepp1b).